Here is a 150-residue protein sequence, read N- to C-terminus: Large ribosomal subunit protein bL9 (150 aa).

Belongs to the bacterial ribosomal protein bL9 family.

In terms of biological role, binds to the 23S rRNA. This chain is Large ribosomal subunit protein bL9, found in Renibacterium salmoninarum (strain ATCC 33209 / DSM 20767 / JCM 11484 / NBRC 15589 / NCIMB 2235).